Reading from the N-terminus, the 20-residue chain is Hongotoxin-5 (20 aa).

It belongs to the short scorpion toxin superfamily. Potassium channel inhibitor family. Alpha-KTx 02 subfamily. Expressed by the venom gland.

Its subcellular location is the secreted. Its function is as follows. Potent selective inhibitor of Kv1/KCNA voltage-gated potassium channels. The protein is Hongotoxin-5 of Centruroides limbatus (Bark scorpion).